Here is an 82-residue protein sequence, read N- to C-terminus: ATP synthase subunit c (82 aa).

The next 2 helical transmembrane spans lie at 6-26 and 57-77; these read AAAS…GPGI and LAFM…LLFA.

Belongs to the ATPase C chain family. As to quaternary structure, F-type ATPases have 2 components, F(1) - the catalytic core - and F(0) - the membrane proton channel. F(1) has five subunits: alpha(3), beta(3), gamma(1), delta(1), epsilon(1). F(0) has four main subunits: a(1), b(1), b'(1) and c(10-14). The alpha and beta chains form an alternating ring which encloses part of the gamma chain. F(1) is attached to F(0) by a central stalk formed by the gamma and epsilon chains, while a peripheral stalk is formed by the delta, b and b' chains.

It is found in the cell inner membrane. Functionally, f(1)F(0) ATP synthase produces ATP from ADP in the presence of a proton or sodium gradient. F-type ATPases consist of two structural domains, F(1) containing the extramembraneous catalytic core and F(0) containing the membrane proton channel, linked together by a central stalk and a peripheral stalk. During catalysis, ATP synthesis in the catalytic domain of F(1) is coupled via a rotary mechanism of the central stalk subunits to proton translocation. Key component of the F(0) channel; it plays a direct role in translocation across the membrane. A homomeric c-ring of between 10-14 subunits forms the central stalk rotor element with the F(1) delta and epsilon subunits. The chain is ATP synthase subunit c from Gloeobacter violaceus (strain ATCC 29082 / PCC 7421).